A 107-amino-acid polypeptide reads, in one-letter code: Putative septation protein SpoVG (107 aa).

Residues 82 to 107 are disordered; it reads ETDEVIPDKNAQPSSDSEDNGSEEEA. The span at 97–107 shows a compositional bias: acidic residues; sequence DSEDNGSEEEA.

This sequence belongs to the SpoVG family.

Its function is as follows. Could be involved in septation. This is Putative septation protein SpoVG from Staphylococcus carnosus (strain TM300).